The following is a 286-amino-acid chain: Undecaprenyl-diphosphatase (286 aa).

7 helical membrane passes run 50-70 (GAAF…VYFW), 97-117 (MGWL…IFQD), 126-146 (LWIV…ADAV), 156-176 (LTYK…IPGV), 200-220 (SFLL…YKVM), 236-256 (LATL…LKFV), and 264-284 (FVWY…FNVI).

It belongs to the UppP family.

It is found in the cell membrane. The enzyme catalyses di-trans,octa-cis-undecaprenyl diphosphate + H2O = di-trans,octa-cis-undecaprenyl phosphate + phosphate + H(+). Its function is as follows. Catalyzes the dephosphorylation of undecaprenyl diphosphate (UPP). Confers resistance to bacitracin. The chain is Undecaprenyl-diphosphatase from Arthrobacter sp. (strain FB24).